The following is a 278-amino-acid chain: Small ribosomal subunit protein uS2 (278 aa).

Ser-2 bears the N-acetylserine mark. Residues 258-278 are disordered; the sequence is TNEGKTAADEWATGAQTQSNW.

This sequence belongs to the universal ribosomal protein uS2 family. Component of the small ribosomal subunit. Mature ribosomes consist of a small (40S) and a large (60S) subunit. The 40S subunit contains about 33 different proteins and 1 molecule of RNA (18S). The 60S subunit contains about 49 different proteins and 3 molecules of RNA (28S, 5.8S and 5S). Interacts with rps-21.

It is found in the cytoplasm. Functionally, required for the assembly and/or stability of the 40S ribosomal subunit. Required for the processing of the 20S rRNA-precursor to mature 18S rRNA in a late step of the maturation of 40S ribosomal subunits. The sequence is that of Small ribosomal subunit protein uS2 from Caenorhabditis briggsae.